A 1240-amino-acid polypeptide reads, in one-letter code: Ubiquitin carboxyl-terminal hydrolase 36 (1240 aa).

Disordered regions lie at residues A37 to N56 and S100 to A144. Low complexity-rich tracts occupy residues S47–N56 and N101–G132. The region spanning T202–D512 is the USP domain. C211 serves as the catalytic Nucleophile. The active-site Proton acceptor is the H471. Positions A637–V705 are disordered. Residues K639–K649 are compositionally biased toward polar residues. Positions Q650–H662 are enriched in low complexity. Residues S668 to N680 are compositionally biased toward acidic residues. T715 is subject to Phosphothreonine. Disordered regions lie at residues Y723–T818, Y831–L998, D1076–S1163, and R1198–S1240. A phosphoserine mark is found at S725 and S727. The segment covering Q733–Q744 has biased composition (low complexity). Over residues S759 to Q769 the composition is skewed to acidic residues. Positions N794–K815 are enriched in low complexity. The segment covering D843–A859 has biased composition (acidic residues). Over residues T869–S879 the composition is skewed to low complexity. Positions L880 to G890 are enriched in polar residues. S895 carries the post-translational modification Phosphoserine. T898 is subject to Phosphothreonine. Residue S901 is modified to Phosphoserine. The segment covering D918–A941 has biased composition (acidic residues). Positions L976–R988 are enriched in polar residues. The span at D1076 to N1103 shows a compositional bias: low complexity. Over residues A1111–D1120 the composition is skewed to basic and acidic residues. Low complexity predominate over residues Q1231–S1240.

The protein belongs to the peptidase C19 family. Interacts with atms/PAF1, but not with CycT.

It is found in the nucleus. It localises to the nucleolus. It catalyses the reaction Thiol-dependent hydrolysis of ester, thioester, amide, peptide and isopeptide bonds formed by the C-terminal Gly of ubiquitin (a 76-residue protein attached to proteins as an intracellular targeting signal).. Its function is as follows. Required for maintaining multiple types of adult stem cells, including male and female germline, epithelial follicle cell and intestinal stem cells. May function as a transcriptional repressor by continually deubiquiting histone H2B at the promoters of genes critical for cellular differentiation, thereby preventing histone H3 'Lys-4' trimethylation (H3K4). Controls selective autophagy activation by ubiquitinated proteins. The sequence is that of Ubiquitin carboxyl-terminal hydrolase 36 (Usp36) from Drosophila grimshawi (Hawaiian fruit fly).